Reading from the N-terminus, the 167-residue chain is NADH-quinone oxidoreductase subunit B 2 (167 aa).

4 residues coordinate [4Fe-4S] cluster: Cys38, Cys39, Cys104, and Cys133.

It belongs to the complex I 20 kDa subunit family. As to quaternary structure, NDH-1 is composed of 14 different subunits. Subunits NuoB, C, D, E, F, and G constitute the peripheral sector of the complex. The cofactor is [4Fe-4S] cluster.

It localises to the cell membrane. The enzyme catalyses a quinone + NADH + 5 H(+)(in) = a quinol + NAD(+) + 4 H(+)(out). Its function is as follows. NDH-1 shuttles electrons from NADH, via FMN and iron-sulfur (Fe-S) centers, to quinones in the respiratory chain. The immediate electron acceptor for the enzyme in this species is believed to be ubiquinone. Couples the redox reaction to proton translocation (for every two electrons transferred, four hydrogen ions are translocated across the cytoplasmic membrane), and thus conserves the redox energy in a proton gradient. This is NADH-quinone oxidoreductase subunit B 2 from Roseiflexus sp. (strain RS-1).